Here is a 1684-residue protein sequence, read N- to C-terminus: Protein Wiz (1684 aa).

A disordered region spans residues 1–77; it reads MEGLLAGGLA…PGLSEALPRA (77 aa). The segment covering 13–24 has biased composition (basic and acidic residues); that stretch reads DHPRGPAPREDI. 5 consecutive C2H2-type zinc fingers follow at residues 308-330, 345-367, 454-477, 734-756, and 802-824; these read FPCI…MSQH, LACS…WQLH, NTCV…RLVH, RKCP…VRGH, and MRCD…ARAH. Positions 854 to 876 are disordered; it reads LPPSPLGREPGGPPRSFLTSRRP. A C2H2-type 6 zinc finger spans residues 903–925; the sequence is TTCEVCGACFETRKGLSSHARSH. Residues K916, K972, K988, K1000, and K1021 each participate in a glycyl lysine isopeptide (Lys-Gly) (interchain with G-Cter in SUMO2) cross-link. The segment at 1005-1072 is disordered; sequence FSAKGLTHPS…PLNLTSGPEP (68 aa). S1029 bears the Phosphoserine mark. A Phosphothreonine modification is found at T1031. Glycyl lysine isopeptide (Lys-Gly) (interchain with G-Cter in SUMO2) cross-links involve residues K1033 and K1038. Residues S1039 and S1045 each carry the phosphoserine modification. Over residues 1040–1057 the composition is skewed to polar residues; that stretch reads PQLSLSPRPTSPKAQWPQ. At T1049 the chain carries Phosphothreonine. S1050 and S1058 each carry phosphoserine. The interaction with CTBP1 and CTBP2 1 stretch occupies residues 1063–1067; it reads PLNLT. The C2H2-type 7 zinc finger occupies 1076 to 1098; the sequence is IRCEFCGEFFENRKGLSSHARSH. A Glycyl lysine isopeptide (Lys-Gly) (interchain with G-Cter in SUMO2) cross-link involves residue K1089. Residues S1112 and S1139 each carry the phosphoserine modification. The disordered stretch occupies residues 1127–1208; that stretch reads SRPGGHLHPP…GLATPSLPKK (82 aa). Glycyl lysine isopeptide (Lys-Gly) (interchain with G-Cter in SUMO2) cross-links involve residues K1141 and K1145. 3 positions are modified to phosphoserine: S1155, S1160, and S1167. Residues K1171 and K1172 each participate in a glycyl lysine isopeptide (Lys-Gly) (interchain with G-Cter in SUMO2) cross-link. S1179 and S1184 each carry phosphoserine. K1195 is modified (N6,N6,N6-trimethyllysine; by EHMT2; alternate). K1195 is subject to N6,N6-dimethyllysine; by EHMT2; alternate. K1210 is covalently cross-linked (Glycyl lysine isopeptide (Lys-Gly) (interchain with G-Cter in SUMO2)). Positions 1247 to 1251 are interaction with CTBP1 and CTBP2 2; sequence PLNLS. The segment at 1260-1282 adopts a C2H2-type 8 zinc-finger fold; the sequence is IRCEFCGEFFENRKGLSSHARSH. A Glycyl lysine isopeptide (Lys-Gly) (interchain with G-Cter in SUMO2) cross-link involves residue K1273. A Phosphoserine modification is found at S1296. Residue K1315 forms a Glycyl lysine isopeptide (Lys-Gly) (interchain with G-Cter in SUMO2) linkage. The disordered stretch occupies residues 1320–1384; it reads AGDLAPALTE…SKPSAASYLG (65 aa). A compositionally biased stretch (low complexity) spans 1335–1351; the sequence is AAPGALHSPLPLSPLAS. Residues S1342 and S1347 each carry the phosphoserine modification. Glycyl lysine isopeptide (Lys-Gly) (interchain with G-Cter in SUMO2) cross-links involve residues K1376, K1389, K1403, K1405, and K1415. The C2H2-type 9 zinc-finger motif lies at 1430–1452; that stretch reads ACCELCGLYFENRKALASHARAH. Glycyl lysine isopeptide (Lys-Gly) (interchain with G-Cter in SUMO2) cross-links involve residues K1481, K1497, and K1510. 2 disordered regions span residues 1496–1587 and 1592–1611; these read TKKF…GEEV and QKLE…PSLV. Phosphoserine is present on S1550. Residue K1556 forms a Glycyl lysine isopeptide (Lys-Gly) (interchain with G-Cter in SUMO1); alternate linkage. Residue K1556 forms a Glycyl lysine isopeptide (Lys-Gly) (interchain with G-Cter in SUMO2); alternate linkage. Residues 1556 to 1574 show a composition bias toward basic and acidic residues; it reads KSEEHQRQNINKFERRQAR. Residues K1567 and K1593 each participate in a glycyl lysine isopeptide (Lys-Gly) (interchain with G-Cter in SUMO2) cross-link. A compositionally biased stretch (pro residues) spans 1599-1611; that stretch reads QPPPRVRPVPSLV. The C2H2-type 10 zinc-finger motif lies at 1629 to 1655; that stretch reads LKCRFCEVEFQGPLSIQEEWVRHLQRH. Positions 1662–1684 are disordered; the sequence is SKADPPPEEPQAPQAQTAAVEAP. K1663 is covalently cross-linked (Glycyl lysine isopeptide (Lys-Gly) (interchain with G-Cter in SUMO2)). The span at 1672 to 1684 shows a compositional bias: low complexity; the sequence is QAPQAQTAAVEAP.

This sequence belongs to the krueppel C2H2-type zinc-finger protein family. As to quaternary structure, part of a complex containing at least CDYL, REST, WIZ, SETB1, EHMT1 and EHMT2. Interacts with EHMT1, EHMT2, CTBP1 and CTBP2. As to expression, according to PubMed:9795207, isoform L and isoform S are brain-specific. According to PubMed:16702210, isoform S is ubiquitously expressed.

The protein localises to the nucleus. In terms of biological role, may link EHMT1 and EHMT2 histone methyltransferases to the CTBP corepressor machinery. May be involved in EHMT1-EHMT2 heterodimer formation and stabilization. In Mus musculus (Mouse), this protein is Protein Wiz (Wiz).